The following is a 362-amino-acid chain: Atypical chemokine receptor 3 (362 aa).

Residues 1 to 47 (MDVHLFDYAEPGNYSDINWPCNSSDCIVVDTVQCPTMPNKNVLLYTL) are Extracellular-facing. Residues Asn-13 and Asn-22 are each glycosylated (N-linked (GlcNAc...) asparagine). A helical membrane pass occupies residues 48 to 68 (SFIYIFIFVIGMIANSVVVWV). The Cytoplasmic portion of the chain corresponds to 69 to 81 (NIQAKTTGYDTHC). Residues 82 to 102 (YILNLAIADLWVVITIPVWVV) traverse the membrane as a helical segment. Residues 103 to 118 (SLVQHNQWPMGELTCK) are Extracellular-facing. Residues Cys-117 and Cys-196 are joined by a disulfide bond. The helical transmembrane segment at 119–139 (ITHLIFSINLFGSIFFLACMS) threads the bilayer. The Cytoplasmic portion of the chain corresponds to 140–162 (VDRYLSITYFTGTSSYKKKMVRR). Residues 163–183 (VVCILVWLLAFFVSLPDTYYL) traverse the membrane as a helical segment. Residues 184–213 (KTVTSASNNETYCRSFYPEHSIKEWLIGME) are Extracellular-facing. Residues 214–234 (LVSVILGFAVPFTIIAIFYFL) form a helical membrane-spanning segment. Topologically, residues 235–252 (LARAMSASGDQEKHSSRK) are cytoplasmic. Residues 253 to 273 (IIFSYVVVFLVCWLPYHFVVL) traverse the membrane as a helical segment. Topologically, residues 274–296 (LDIFSILHYIPFTCQLENVLFTA) are extracellular. The chain crosses the membrane as a helical span at residues 297 to 319 (LHVTQCLSLVHCCVNPVLYSFIN). Residues 320–362 (RNYRYELMKAFIFKYSAKTGLTKLIDASRVSETEYSALEQNTK) are Cytoplasmic-facing. Residues 324–362 (YELMKAFIFKYSAKTGLTKLIDASRVSETEYSALEQNTK) are C-terminal cytoplasmic tail. Residues Ser-347, Ser-350, and Ser-355 each carry the phosphoserine modification.

Belongs to the G-protein coupled receptor 1 family. Atypical chemokine receptor subfamily. Homodimer. Can form heterodimers with CXCR4; heterodimerization may regulate CXCR4 signaling activity. Interacts with ARRB1 and ARRB2. The Ser/Thr residues in the C-terminal cytoplasmic tail may be phosphorylated. In terms of processing, ubiquitinated at the Lys residues in its C-terminal cytoplasmic tail and is essential for correct trafficking from and to the cell membrane. Deubiquitinated by CXCL12-stimulation in a reversible manner. As to expression, not detected in blood, liver, lung and heart, but high expression detected in several tumor cell lines (at protein level). Expressed in heart, spleen, kidney, lung, ovary, brain, testis, astrocytes, neutrophils and B-lymphocytes.

The protein localises to the cell membrane. The protein resides in the early endosome. Its subcellular location is the recycling endosome. In terms of biological role, atypical chemokine receptor that controls chemokine levels and localization via high-affinity chemokine binding that is uncoupled from classic ligand-driven signal transduction cascades, resulting instead in chemokine sequestration, degradation, or transcytosis. Also known as interceptor (internalizing receptor) or chemokine-scavenging receptor or chemokine decoy receptor. Acts as a receptor for chemokines CXCL11 and CXCL12/SDF1. Chemokine binding does not activate G-protein-mediated signal transduction but instead induces beta-arrestin recruitment, leading to ligand internalization and activation of MAPK signaling pathway. Required for regulation of CXCR4 protein levels in migrating interneurons, thereby adapting their chemokine responsiveness. In glioma cells, transduces signals via MEK/ERK pathway, mediating resistance to apoptosis. Promotes cell growth and survival. Not involved in cell migration, adhesion or proliferation of normal hematopoietic progenitors but activated by CXCL11 in malignant hemapoietic cells, leading to phosphorylation of ERK1/2 (MAPK3/MAPK1) and enhanced cell adhesion and migration. Plays a regulatory role in CXCR4-mediated activation of cell surface integrins by CXCL12. Required for heart valve development. Regulates axon guidance in the oculomotor system through the regulation of CXCL12 levels. This Mus musculus (Mouse) protein is Atypical chemokine receptor 3.